A 108-amino-acid polypeptide reads, in one-letter code: Latartoxin-2c (108 aa).

The N-terminal stretch at 1-19 (MKVLVITALCFILLQNVLG) is a signal peptide. A propeptide spans 20–42 (EDTYEDLQNYIENLINENQDEAR) (removed in mature form). Residues 39–42 (DEAR) carry the Processing quadruplet motif motif. 4 cysteine pairs are disulfide-bonded: Cys44–Cys61, Cys51–Cys72, Cys60–Cys84, and Cys74–Cys82. Isoleucine amide is present on Ile107.

The protein belongs to the neurotoxin 19 (CSTX) family. 11 (latartoxin) subfamily. Contains 4 disulfide bonds. In terms of processing, cleavage of the propeptide depends on the processing quadruplet motif (XXXR, with at least one of X being E). Expressed by the venom gland.

The protein localises to the secreted. Its function is as follows. Insect toxin. The polypeptide is Latartoxin-2c (Lachesana tarabaevi (Spider)).